The primary structure comprises 592 residues: Aspartate--tRNA(Asp/Asn) ligase (592 aa).

E177 is a binding site for L-aspartate. Residues 201-204 are aspartate; that stretch reads QLFK. Residue R223 coordinates L-aspartate. ATP is bound by residues 223-225 and Q232; that span reads RDE. H451 contributes to the L-aspartate binding site. E485 serves as a coordination point for ATP. R492 provides a ligand contact to L-aspartate. Residue 537-540 coordinates ATP; it reads GLDR.

It belongs to the class-II aminoacyl-tRNA synthetase family. Type 1 subfamily. In terms of assembly, homodimer.

Its subcellular location is the cytoplasm. The catalysed reaction is tRNA(Asx) + L-aspartate + ATP = L-aspartyl-tRNA(Asx) + AMP + diphosphate. Aspartyl-tRNA synthetase with relaxed tRNA specificity since it is able to aspartylate not only its cognate tRNA(Asp) but also tRNA(Asn). Reaction proceeds in two steps: L-aspartate is first activated by ATP to form Asp-AMP and then transferred to the acceptor end of tRNA(Asp/Asn). The chain is Aspartate--tRNA(Asp/Asn) ligase from Bacillus subtilis (strain 168).